A 100-amino-acid chain; its full sequence is MARMKHTARMSTGGKAPRKQLASKALRKAPPPPTKGVKQPTTTTSGKWRFARFHRKLPFQGLVRKIWQDLKTHLRFKNHSVPPLEEVTEVYPCQTIGGCY.

The disordered stretch occupies residues 1–46 (MARMKHTARMSTGGKAPRKQLASKALRKAPPPPTKGVKQPTTTTSG).

The protein belongs to the histone H3 family. As to quaternary structure, the nucleosome is a histone octamer containing two molecules each of H2A, H2B, H3 and H4 assembled in one H3-H4 heterotetramer and two H2A-H2B heterodimers. The octamer wraps approximately 147 bp of DNA. In terms of tissue distribution, pollen specific.

The protein localises to the nucleus. Its subcellular location is the chromosome. In terms of biological role, core component of nucleosome. Nucleosomes wrap and compact DNA into chromatin, limiting DNA accessibility to the cellular machineries which require DNA as a template. Histones thereby play a central role in transcription regulation, DNA repair, DNA replication and chromosomal stability. DNA accessibility is regulated via a complex set of post-translational modifications of histones, also called histone code, and nucleosome remodeling. In Lilium longiflorum (Trumpet lily), this protein is Histone H3-like 2 (gcH3).